Reading from the N-terminus, the 388-residue chain is Succinate--CoA ligase [ADP-forming] subunit beta (388 aa).

The region spanning 9-244 (KQLFAEFGLP…PSQEDKREAH (236 aa)) is the ATP-grasp domain. ATP contacts are provided by residues Lys46, 53–55 (GRG), Glu99, Ser102, and Glu107. Positions 199 and 213 each coordinate Mg(2+). Substrate is bound by residues Asn264 and 321-323 (GIV).

Belongs to the succinate/malate CoA ligase beta subunit family. As to quaternary structure, heterotetramer of two alpha and two beta subunits. Requires Mg(2+) as cofactor.

It catalyses the reaction succinate + ATP + CoA = succinyl-CoA + ADP + phosphate. It carries out the reaction GTP + succinate + CoA = succinyl-CoA + GDP + phosphate. Its pathway is carbohydrate metabolism; tricarboxylic acid cycle; succinate from succinyl-CoA (ligase route): step 1/1. Succinyl-CoA synthetase functions in the citric acid cycle (TCA), coupling the hydrolysis of succinyl-CoA to the synthesis of either ATP or GTP and thus represents the only step of substrate-level phosphorylation in the TCA. The beta subunit provides nucleotide specificity of the enzyme and binds the substrate succinate, while the binding sites for coenzyme A and phosphate are found in the alpha subunit. This chain is Succinate--CoA ligase [ADP-forming] subunit beta, found in Vibrio vulnificus (strain YJ016).